We begin with the raw amino-acid sequence, 457 residues long: MVLPHEPEFEQALHELETSLQPFLTTNPQYKKALEIIQVPERVLQFRVTWEDDQGKPQVNRGFRVQYNSALGPYKGGLRLHPTVNLSILKFLGFEQTFKNALTGLSMGGGKGGSDFDPKGKSDNEIRRFCVAFMSELFRHIGQDTDVPAGDIGTGAREIGFLFGAYRRLKNEFTGMLTGKGINWGGSFIRPEATGYGLIYYVEHMIAHACPEYSLDRPSTLVAISGSGNVSQFTALKVIELGATVLSLSDSKGSLISEKGYTKEAIEKIAELKLKGGALEAIVDDLGAGYTYHAGKRPWTLLPQVHIALPGATQNEVSQEEAEALVKAGTRIVAEGSNMGCTEEAIAIFENSRRASRAGVWYAPGKASNCGGVAVSGLEMAQNSQRLAWSTQEVDAKLKSIMAECYQICYTAGSRWSGEKVAEGVAEGEALPSLLSGANLAGFIKVADAMKEQGDWW.

K111 is an active-site residue.

It belongs to the Glu/Leu/Phe/Val dehydrogenases family. As to quaternary structure, homohexamer.

The enzyme catalyses L-glutamate + NADP(+) + H2O = 2-oxoglutarate + NH4(+) + NADPH + H(+). The polypeptide is NADP-specific glutamate dehydrogenase (gdhA) (Agaricus bisporus (White button mushroom)).